Reading from the N-terminus, the 268-residue chain is Ribonuclease P protein subunit p30 (268 aa).

Ala2 carries the N-acetylalanine modification. The residue at position 251 (Ser251) is a Phosphoserine.

It belongs to the eukaryotic/archaeal RNase P protein component 3 family. As to quaternary structure, component of nuclear RNase P and RNase MRP ribonucleoproteins. RNase P consists of a catalytic RNA moiety and about 10 protein subunits; POP1, POP4, POP5, POP7, RPP14, RPP21, RPP25, RPP30, RPP38 and RPP40. Within the RNase P complex, POP1, POP7 and RPP25 form the 'finger' subcomplex, POP5, RPP14, RPP40 and homodimeric RPP30 form the 'palm' subcomplex, and RPP21, POP4 and RPP38 form the 'wrist' subcomplex. All subunits of the RNase P complex interact with the catalytic RNA. Several subunits of RNase P are also part of the RNase MRP complex. RNase MRP consists of a catalytic RNA moiety and about 8 protein subunits; POP1, POP7, RPP25, RPP30, RPP38, RPP40 and possibly also POP4 and POP5.

The protein localises to the nucleus. It localises to the nucleolus. In terms of biological role, component of ribonuclease P, a ribonucleoprotein complex that generates mature tRNA molecules by cleaving their 5'-ends. Also a component of the MRP ribonuclease complex, which cleaves pre-rRNA sequences. The sequence is that of Ribonuclease P protein subunit p30 (Rpp30) from Mus musculus (Mouse).